A 604-amino-acid polypeptide reads, in one-letter code: MRMTVVKHVMLTLICGTLSWGVQINTLAYASAIKSEDGFDMDEDGVYGDDIQDYINAAYTHERPFIQDKSKHKMETYTQSLLHTDLETDSQISRERGNYINAQELGDGNNEHVDLVNRTMTKNVLMKHGHRNFMDASILYKSVHGITHLHAHQRPTEVSVAENQQLLLKVHIPQENEHTYTERWSFLPAAPCKLTPPSIQQVCIKHGACIHDVVVDVDCIAESMEHTLVEIGYVVHASKAVHPTWTVVNITEDFANYGFDTPDVKPGVLKFEHMNAHHAGVYIWNLQGTHGENMYVTFLVKLNNSIENHIDLPAVTPKPKGAEFHTWHYHSHVFSVGETFSLPMHLQYKIHDTPFDLLLEWLYVPINPTCQPMRLYSACVYHETVPSCLSPENPECTFASPHIARRVANTVYQNCEHVNYTADCLAVSHVEPGSGLEIQNGGSALLFVNAAESMSGLYVFIIHFNGHVETVAYTVVSTIENFVNAIEEHGFPPEIHNVPSPSSPNVTANNDVISETNTFPFKTYAGITGGFAVLALVCLALALVCTKRKFGHRSYWSDKAAYGQSTYYAGVPVDDFEDDTEVEVDEGAECGGSGYTVYIDKRTR.

The signal sequence occupies residues 1 to 24 (MRMTVVKHVMLTLICGTLSWGVQI). At 25 to 526 (NTLAYASAIK…NTFPFKTYAG (502 aa)) the chain is on the virion surface side. N-linked (GlcNAc...) asparagine; by host glycosylation is present at N117. The interval 192 to 219 (CKLTPPSIQQVCIKHGACIHDVVVDVDC) is interaction with gI. N249 and N303 each carry an N-linked (GlcNAc...) asparagine; by host glycan. 3 disulfide bridges follow: C370–C396, C379–C388, and C415–C424. N-linked (GlcNAc...) asparagine; by host glycosylation is found at N419 and N505. A helical transmembrane segment spans residues 527–544 (ITGGFAVLALVCLALALV). Residues 545–604 (CTKRKFGHRSYWSDKAAYGQSTYYAGVPVDDFEDDTEVEVDEGAECGGSGYTVYIDKRTR) are Intravirion-facing. Residues 568–571 (YAGV) carry the Internalization motif motif. The segment at 574-586 (DDFEDDTEVEVDE) is acidic.

It belongs to the alphaherpesvirinae glycoprotein E family. Interacts with gI. Post-translationally, phosphorylated within the acidic cluster. Phosphorylation determines whether endocytosed viral gE traffics to the trans-Golgi network or recycles to the cell membrane.

It is found in the virion membrane. The protein localises to the host cell membrane. Its subcellular location is the host cell junction. It localises to the host Golgi apparatus membrane. The protein resides in the host endosome membrane. Its function is as follows. In epithelial cells, the heterodimer gE/gI is required for the cell-to-cell spread of the virus, by sorting nascent virions to cell junctions. Once the virus reaches the cell junctions, virus particles can spread to adjacent cells extremely rapidly through interactions with cellular receptors that accumulate at these junctions. Implicated in basolateral spread in polarized cells. In neuronal cells, gE/gI is essential for the anterograde spread of the infection throughout the host nervous system. Together with US9, the heterodimer gE/gI is involved in the sorting and transport of viral structural components toward axon tips. The protein is Envelope glycoprotein E (gE) of Cercopithecine herpesvirus 9 (strain DHV) (CeHV-9).